The primary structure comprises 156 residues: Crossover junction endodeoxyribonuclease RuvC (156 aa).

Catalysis depends on residues D7, E67, and D140. The Mg(2+) site is built by D7, E67, and D140.

This sequence belongs to the RuvC family. Homodimer which binds Holliday junction (HJ) DNA. The HJ becomes 2-fold symmetrical on binding to RuvC with unstacked arms; it has a different conformation from HJ DNA in complex with RuvA. In the full resolvosome a probable DNA-RuvA(4)-RuvB(12)-RuvC(2) complex forms which resolves the HJ. Requires Mg(2+) as cofactor.

The protein resides in the cytoplasm. It carries out the reaction Endonucleolytic cleavage at a junction such as a reciprocal single-stranded crossover between two homologous DNA duplexes (Holliday junction).. The RuvA-RuvB-RuvC complex processes Holliday junction (HJ) DNA during genetic recombination and DNA repair. Endonuclease that resolves HJ intermediates. Cleaves cruciform DNA by making single-stranded nicks across the HJ at symmetrical positions within the homologous arms, yielding a 5'-phosphate and a 3'-hydroxyl group; requires a central core of homology in the junction. The consensus cleavage sequence is 5'-(A/T)TT(C/G)-3'. Cleavage occurs on the 3'-side of the TT dinucleotide at the point of strand exchange. HJ branch migration catalyzed by RuvA-RuvB allows RuvC to scan DNA until it finds its consensus sequence, where it cleaves and resolves the cruciform DNA. The sequence is that of Crossover junction endodeoxyribonuclease RuvC from Rickettsia felis (strain ATCC VR-1525 / URRWXCal2) (Rickettsia azadi).